A 477-amino-acid chain; its full sequence is Trigger factor (477 aa).

In terms of domain architecture, PPIase FKBP-type spans 169–254; the sequence is EDRVTIDYLG…VKEVAKPNEL (86 aa). The segment at 435–477 is disordered; it reads VSKEELTAEDEDAASEAKPAKKAAAKKKAAPKKKAEEGKSEEA. A compositionally biased stretch (basic residues) spans 454-466; sequence AKKAAAKKKAAPK. Over residues 467–477 the composition is skewed to basic and acidic residues; sequence KKAEEGKSEEA.

The protein belongs to the FKBP-type PPIase family. Tig subfamily.

The protein localises to the cytoplasm. It catalyses the reaction [protein]-peptidylproline (omega=180) = [protein]-peptidylproline (omega=0). In terms of biological role, involved in protein export. Acts as a chaperone by maintaining the newly synthesized protein in an open conformation. Functions as a peptidyl-prolyl cis-trans isomerase. The protein is Trigger factor of Brucella suis biovar 1 (strain 1330).